A 773-amino-acid chain; its full sequence is Acyl-homoserine lactone acylase PvdQ (773 aa).

Residues 1–23 (MSRALPGFLFAGLSVAVVLPAQA) form the signal peptide. A propeptide spans 200-221 (SQQVQALQLAAARNERFALERG) (spacer peptide). Ser222 (nucleophile) is an active-site residue.

It belongs to the peptidase S45 family. Heterodimer of an alpha subunit and a beta subunit processed from the same precursor.

The protein localises to the periplasm. The catalysed reaction is an N-acyl-L-homoserine lactone + H2O = L-homoserine lactone + a carboxylate. Catalyzes the deacylation of acyl-homoserine lactone (AHL or acyl-HSL), releasing homoserine lactone (HSL) and the corresponding fatty acid. Possesses a specificity for the degradation of long-chain acyl-HSLs (side chains of 11 to 14 carbons in length). The sequence is that of Acyl-homoserine lactone acylase PvdQ (pvdQ) from Pseudomonas syringae pv. tomato (strain ATCC BAA-871 / DC3000).